Here is a 345-residue protein sequence, read N- to C-terminus: Membrane progestin receptor gamma-A (345 aa).

Residues 1–52 lie on the Cytoplasmic side of the membrane; that stretch reads MLNLIKLPQVFTINQVPKVFHEDGIISGYRHPCSSAKDCVLSLFQLTNETLN. Residues 53–73 form a helical membrane-spanning segment; the sequence is IWTHFLPTWFFLWKLLTVVLV. At 74-80 the chain is on the extracellular side; the sequence is LEDWRDP. A helical membrane pass occupies residues 81–101; sequence FIWPFLVFLLSCCVYPLASSC. At 102-114 the chain is on the cytoplasmic side; the sequence is AHTFSTMSERARH. Residues 115–135 form a helical membrane-spanning segment; that stretch reads ICFFFDYGALSFYSLGSAIIY. Residues 136–148 are Extracellular-facing; that stretch reads SSYSFPDKWVNGT. Residues 149-169 form a helical membrane-spanning segment; sequence FHLNYVSIAVVNSIISTALAC. Topologically, residues 170–201 are cytoplasmic; the sequence is YSRLGLPFLEYNCHSIKRPSGKLDQKLCKCLR. A helical transmembrane segment spans residues 202–222; that stretch reads IIAFVYPYLFDNIPLFYRIFV. Residues 223 to 272 lie on the Extracellular side of the membrane; that stretch reads CAGEGCTVNEANTVHYQHTSLAFFTGFLFATHLPERLAPGSFDYIGHSHQ. The helical transmembrane segment at 273–293 threads the bilayer; sequence LFHVFAIIGTYFQMTAIELDM. Residues 294–314 are Cytoplasmic-facing; the sequence is AARKQWLHAHLPPVTFLNTVG. Residues 315–335 traverse the membrane as a helical segment; it reads AAFFSVVSGLCIVYVFSLSLF. The Extracellular segment spans residues 336–345; that stretch reads STRGVKNKSF.

It belongs to the ADIPOR family.

Its subcellular location is the membrane. Steroid membrane receptor. Binds progesterone. May be involved in oocyte maturation. This Danio rerio (Zebrafish) protein is Membrane progestin receptor gamma-A (paqr5a).